The chain runs to 573 residues: Putative inorganic phosphate transporter C1683.01 (573 aa).

The next 6 helical transmembrane spans lie at 48-68, 100-120, 124-144, 154-174, 194-214, and 230-250; these read MMLA…INLV, AASN…GDFF, FVYG…IAMP, MMWV…DYPM, LIFA…IILL, and LEGV…GVLI. Over residues 261-270 the composition is skewed to polar residues; the sequence is FKNSQQLNSG. Disordered stretches follow at residues 261-280 and 290-312; these read FKNS…TSLN and PSVT…RSNT. Transmembrane regions (helical) follow at residues 348–368, 397–417, 422–442, 451–471, 487–507, and 510–530; these read HLLG…GVNL, LIIA…LVEI, WIQL…AGRW, FACF…TTFI, GISA…FNFL, and IIGY…GILF.

The protein belongs to the major facilitator superfamily. Sugar transporter (TC 2.A.1.1) family.

The protein resides in the endoplasmic reticulum membrane. High-affinity transporter for external inorganic phosphate. In Schizosaccharomyces pombe (strain 972 / ATCC 24843) (Fission yeast), this protein is Putative inorganic phosphate transporter C1683.01.